A 197-amino-acid polypeptide reads, in one-letter code: uncharacterized protein (197 aa).

This is an uncharacterized protein from Archaeoglobus fulgidus (strain ATCC 49558 / DSM 4304 / JCM 9628 / NBRC 100126 / VC-16).